A 575-amino-acid chain; its full sequence is Reverse gyrse subunit B (575 aa).

An RG N-terminal-type; degenerate zinc finger spans residues 1–39; it reads MKIYYNNVCPNCSGRISNERLIKGLPCENDYPYEEGTIE. ATP is bound by residues glutamine 83 and 100–107; that span reads APTGMGKT. Residues 87 to 247 form the Helicase ATP-binding domain; it reads FIRAYKGYSF…KLKISGKDLE (161 aa). Residues 204–207 carry the DEAD box motif; that stretch reads DDVD. In terms of domain architecture, Helicase C-terminal spans 316–465; that stretch reads QTLELIKKLG…ALKMVEEAIE (150 aa).

Belongs to the DEAD box helicase family. DDVD subfamily. As to quaternary structure, heterodimer of an RgyA and RgyB subunit.

The protein localises to the cytoplasm. The catalysed reaction is ATP + H2O = ADP + phosphate + H(+). Functionally, modifies the topological state of DNA by introducing positive supercoils in an ATP-dependent process. Binds to single-stranded DNA, transiently cleaves and then rejoins the end, introducing a positive supercoil in the process. The scissile phosphodiester is attacked by the catalytic tyrosine of the enzyme, resulting in the formation of a DNA-(5'-phosphotyrosyl)-enzyme intermediate. Probably involved in rewinding DNA strands in regions of the chromosome that have opened up to allow replication, transcription, DNA repair or for DNA protection. Reconstituted holoenzyme binds dsDNA a bit better than ssDNA, this subunit preferentially binds dsDNA. In isolation this subunit has DNA-stimulated ATPase activity that is stimulated by topoisomerase-domain containing RgyA. This subunit inhibits the relaxation activity of the topoisomerase subunit while promoting positive supercoiling. This chain is Reverse gyrse subunit B, found in Nanoarchaeum equitans (strain Kin4-M).